The sequence spans 562 residues: Formate--tetrahydrofolate ligase (562 aa).

77–84 (TPAGEGKS) is a binding site for ATP.

Belongs to the formate--tetrahydrofolate ligase family.

It catalyses the reaction (6S)-5,6,7,8-tetrahydrofolate + formate + ATP = (6R)-10-formyltetrahydrofolate + ADP + phosphate. It functions in the pathway one-carbon metabolism; tetrahydrofolate interconversion. The protein is Formate--tetrahydrofolate ligase of Corynebacterium jeikeium (strain K411).